An 817-amino-acid chain; its full sequence is Actin filament-associated protein 1-like 2 (817 aa).

At tyrosine 56 the chain carries Phosphotyrosine. Residues 63 to 164 (HKQQNAESQD…KGKSAPHQWP (102 aa)) are disordered. Residues 123 to 139 (YYEEAEPYDTSLNEDGE) show a composition bias toward acidic residues. 2 PH domains span residues 175–271 (DARI…EVSG) and 353–447 (SLET…SESG). Serine 408 bears the Phosphoserine mark. Tyrosine 413 bears the Phosphotyrosine mark. At serine 484 the chain carries Phosphoserine. The span at 512–528 (TTAGEAPEEATPATDAP) shows a compositional bias: low complexity. Disordered regions lie at residues 512 to 657 (TTAG…KLGK) and 754 to 786 (GTTVDTTHLESVSPRPKAATPTPAPDCTPVNSA). A coiled-coil region spans residues 652–748 (EIKLGKNRTE…VKDSLRKAEA (97 aa)). The segment covering 754–763 (GTTVDTTHLE) has biased composition (polar residues). A compositionally biased stretch (low complexity) spans 767 to 782 (PRPKAATPTPAPDCTP).

Interacts with SRC. Interacts with LCK when tyrosine phosphorylated. In terms of processing, tyrosine phosphorylated (by SRC).

The protein localises to the cytoplasm. In terms of biological role, may play a role in a signaling cascade by enhancing the kinase activity of SRC. Contributes to SRC-regulated transcription activation. In Bos taurus (Bovine), this protein is Actin filament-associated protein 1-like 2 (AFAP1L2).